The sequence spans 1196 residues: Cingulin (1196 aa).

The tract at residues 7–354 (MAEPRGPVDH…LVMTSGSAKG (348 aa)) is head. Residues 48–62 (ANTYGVAVRVQGIAG) carry the ZIM motif. The tract at residues 54 to 67 (AVRVQGIAGQPFVV) is interaction with TJP1/ZO1. Residues 82 to 105 (IKGTNNRGPPGALSSDSELPESTY) are disordered. Residues Ser-95, Ser-96, Ser-98, Ser-135, Ser-137, Ser-140, Ser-155, Ser-165, and Ser-214 each carry the phosphoserine modification. A compositionally biased stretch (polar residues) spans 95–105 (SSDSELPESTY). Positions 183–263 (NKFDSRQGGQ…NQGPLGGFSC (81 aa)) are disordered. Positions 218–231 (RLPRDTLDEREHQF) are enriched in basic and acidic residues. The segment covering 245 to 256 (MGNSKQSSQNQG) has biased composition (polar residues). Residue Ser-274 is modified to Phosphoserine. Residues 355–1150 (LTGQSELSQK…ARIKTLEKDS (796 aa)) adopt a coiled-coil conformation. Lys-576 is modified (N6-acetyllysine). Residues 884–897 (AQRQAKEWATEAEK) are compositionally biased toward basic and acidic residues. Disordered regions lie at residues 884 to 906 (AQRQ…SRLQ), 1023 to 1061 (DLKS…EERE), and 1149 to 1174 (DSWR…EEFD). Low complexity predominate over residues 1038–1050 (SASLSQLESQNQE). Residues 1051 to 1061 (LQERLQAEERE) show a composition bias toward basic and acidic residues. The tract at residues 1155–1196 (SRSAAESAQREGLSSDEEFDSVYDPSSIASLLTESNLQTSSC) is tail. 3 positions are modified to phosphoserine: Ser-1168, Ser-1169, and Ser-1175.

Belongs to the cingulin family. In terms of assembly, homodimer. Interacts with TJP1/ZO1 and SPEF1.

Its subcellular location is the cell junction. It localises to the tight junction. In terms of biological role, probably plays a role in the formation and regulation of the tight junction (TJ) paracellular permeability barrier. The sequence is that of Cingulin from Canis lupus familiaris (Dog).